Consider the following 171-residue polypeptide: Der GTPase-activating protein YihI (171 aa).

2 disordered regions span residues M1–L99 and L145–N171. Residues T20 to D30 show a composition bias toward basic and acidic residues. Residues R31–H40 are compositionally biased toward basic residues. Acidic residues predominate over residues Y147–Q160.

This sequence belongs to the YihI family. As to quaternary structure, interacts with Der.

Functionally, a GTPase-activating protein (GAP) that modifies Der/EngA GTPase function. May play a role in ribosome biogenesis. This chain is Der GTPase-activating protein YihI, found in Salmonella choleraesuis (strain SC-B67).